The primary structure comprises 360 residues: N-acetylmuramoyl-L-alanine amidase CwlL (360 aa).

The signal sequence occupies residues 1–39; it reads MVKVVKNFVKVNQYTRPGLKLAGVKGIVMHYTATPGASA. The N-acetylmuramoyl-L-alanine amidase domain maps to 40–154; the sequence is LNERDYFNGT…DVTNKICPAP (115 aa). Tandem repeats lie at residues 166–191, 196–259, 265–289, and 291–355. 2 2 X approximate repeats regions span residues 166–289 and 196–355; these read RKKV…KVKS and LKKG…KAKL.

Belongs to the N-acetylmuramoyl-L-alanine amidase 2 family.

The protein localises to the secreted. It carries out the reaction Hydrolyzes the link between N-acetylmuramoyl residues and L-amino acid residues in certain cell-wall glycopeptides.. The protein is N-acetylmuramoyl-L-alanine amidase CwlL (cwlL) of Bacillus licheniformis.